A 254-amino-acid chain; its full sequence is L-rhamnose 1-dehydrogenase (NADP(+)) (254 aa).

6 residues coordinate NADP(+): Gly13, Ser15, Arg16, Ile18, Asp64, and Asn91. Residue Ser144 is the Proton donor of the active site. 4 residues coordinate beta-L-rhamnose: Ser144, Ser146, Gln154, and Tyr157. NADP(+)-binding residues include Tyr157 and Lys161. The active-site Proton acceptor is Tyr157. Lys161 acts as the Lowers pKa of active site Tyr in catalysis. Thr189 contacts beta-L-rhamnose. Ile190 is a binding site for NADP(+). Asn195 provides a ligand contact to beta-L-rhamnose.

It belongs to the short-chain dehydrogenases/reductases (SDR) family.

The catalysed reaction is L-rhamnofuranose + NADP(+) = L-rhamnono-1,4-lactone + NADPH + H(+). It functions in the pathway carbohydrate degradation; L-rhamnose degradation. In terms of biological role, involved in the non-phosphorylated metabolic pathway of L-rhamnose catabolism. Catalyzes the oxidation of L-rhamnose to yield L-rhamnono-1,4-lactone. It can also oxidize L-lyxose and L-mannose, and uses only NADP. The sequence is that of L-rhamnose 1-dehydrogenase (NADP(+)) from Thermoplasma acidophilum (strain ATCC 25905 / DSM 1728 / JCM 9062 / NBRC 15155 / AMRC-C165).